The chain runs to 159 residues: 17.9 kDa class II heat shock protein (159 aa).

The region spanning 43–157 (DAKAMAATPA…PKKPRTIQVK (115 aa)) is the sHSP domain.

Belongs to the small heat shock protein (HSP20) family.

The protein localises to the cytoplasm. The chain is 17.9 kDa class II heat shock protein (HSP17.9-D) from Glycine max (Soybean).